Consider the following 440-residue polypeptide: Lipopolysaccharide-processing protein LpsZ (440 aa).

To E.coli capsule polysaccharide export protein KpsC.

Its subcellular location is the cytoplasm. In terms of biological role, involved in the invasion of nitrogen fixation nodules. May be involved in the biosynthesis of lipopolysaccharides as an enzyme or a regulatory protein. This chain is Lipopolysaccharide-processing protein LpsZ (lpsZ), found in Rhizobium meliloti (Ensifer meliloti).